Consider the following 190-residue polypeptide: Probable RNA-binding protein 18 (190 aa).

An RRM domain is found at 25–106 (HRLWIGNVDP…KKLVVRWAHA (82 aa)).

The sequence is that of Probable RNA-binding protein 18 (rbm18) from Xenopus laevis (African clawed frog).